Consider the following 245-residue polypeptide: 5-oxoprolinase subunit A (245 aa).

The protein belongs to the LamB/PxpA family. As to quaternary structure, forms a complex composed of PxpA, PxpB and PxpC.

The catalysed reaction is 5-oxo-L-proline + ATP + 2 H2O = L-glutamate + ADP + phosphate + H(+). Its function is as follows. Catalyzes the cleavage of 5-oxoproline to form L-glutamate coupled to the hydrolysis of ATP to ADP and inorganic phosphate. The sequence is that of 5-oxoprolinase subunit A from Neisseria meningitidis serogroup C (strain 053442).